Reading from the N-terminus, the 420-residue chain is Gamma-glutamyl phosphate reductase (420 aa).

It belongs to the gamma-glutamyl phosphate reductase family.

The protein resides in the cytoplasm. It carries out the reaction L-glutamate 5-semialdehyde + phosphate + NADP(+) = L-glutamyl 5-phosphate + NADPH + H(+). It functions in the pathway amino-acid biosynthesis; L-proline biosynthesis; L-glutamate 5-semialdehyde from L-glutamate: step 2/2. Functionally, catalyzes the NADPH-dependent reduction of L-glutamate 5-phosphate into L-glutamate 5-semialdehyde and phosphate. The product spontaneously undergoes cyclization to form 1-pyrroline-5-carboxylate. The protein is Gamma-glutamyl phosphate reductase of Cereibacter sphaeroides (strain ATCC 17029 / ATH 2.4.9) (Rhodobacter sphaeroides).